A 270-amino-acid chain; its full sequence is Vegetative storage protein 1 (270 aa).

The N-terminal stretch at 1 to 17 (MKILSLSLLLLLAATVS) is a signal peptide. Residues N115 and N215 are each glycosylated (N-linked (GlcNAc...) asparagine).

Belongs to the APS1/VSP family. As to expression, expressed in leaves and in gynoecia, especially in styles, the basal and distal ends of ovaries and in siliques.

May function as somatic storage protein during early seedling development. The sequence is that of Vegetative storage protein 1 (VSP1) from Arabidopsis thaliana (Mouse-ear cress).